The chain runs to 236 residues: Ribonuclease 3 (236 aa).

An RNase III domain is found at 7-136 (KSYILKKFNI…FIGALYLDQG (130 aa)). Glu49 provides a ligand contact to Mg(2+). The active site involves Asp53. Mg(2+) is bound by residues Asp122 and Glu125. The active site involves Glu125. The DRBM domain occupies 162–232 (DFKSRLQERL…ARAALKILED (71 aa)).

The protein belongs to the ribonuclease III family. In terms of assembly, homodimer. It depends on Mg(2+) as a cofactor.

It localises to the cytoplasm. It catalyses the reaction Endonucleolytic cleavage to 5'-phosphomonoester.. Functionally, digests double-stranded RNA. Involved in the processing of primary rRNA transcript to yield the immediate precursors to the large and small rRNAs (23S and 16S). Processes some mRNAs, and tRNAs when they are encoded in the rRNA operon. Processes pre-crRNA and tracrRNA of type II CRISPR loci if present in the organism. The protein is Ribonuclease 3 of Leuconostoc mesenteroides subsp. mesenteroides (strain ATCC 8293 / DSM 20343 / BCRC 11652 / CCM 1803 / JCM 6124 / NCDO 523 / NBRC 100496 / NCIMB 8023 / NCTC 12954 / NRRL B-1118 / 37Y).